Here is a 432-residue protein sequence, read N- to C-terminus: Cyclic GMP-AMP synthase (432 aa).

110–115 (QGSFQY) contacts GTP. Residues Asp129 and Asp131 each contribute to the Mg(2+) site. Arg180 contributes to the ATP binding site. Asp191 lines the Mg(2+) pocket. Position 255 (Ser255) interacts with ATP. Residues Lys283, Ser297, and Asp344 each coordinate GTP. The disordered stretch occupies residues 413 to 432 (LNAPSKEPSSKPINKTMVSG). A compositionally biased stretch (polar residues) spans 423-432 (KPINKTMVSG).

This sequence belongs to the CD-NTase family. A01 subfamily. Mg(2+) is required as a cofactor.

The catalysed reaction is GTP + ATP = 3',3'-cGAMP + 2 diphosphate. Cyclic nucleotide synthase (second messenger synthase) of a CBASS antivirus system. CBASS (cyclic oligonucleotide-based antiphage signaling system) provides immunity against bacteriophage. The CD-NTase protein synthesizes cyclic nucleotides in response to infection; these serve as specific second messenger signals. The signals activate a diverse range of effectors, leading to bacterial cell death and thus abortive phage infection. A type II-C(GA) CBASS system. Its function is as follows. Catalyzes the synthesis of 3'3'-cyclic GMP-AMP (3'3'-cGAMP) from GTP and ATP, a second messenger in cell signal transduction. Is also able to produce c-di-AMP and c-di-GMP from ATP and GTP, respectively; however, 3'3'-cGAMP is the dominant molecule produced by DncV in vivo, contrary to the 2'3'-cGAMP produced by eukaryotes. By producing cGAMP, down-regulates csgD expression and expression of flagellum regulon genes, which leads to the down-regulation of rdar biofilm formation and flagellum-mediated swimming and swarming motility in a temperature-dependent manner. Controls the activity of cGAMP-activated phospholipase CapV, a patatin-like lipase that is a direct 3',3'-cGAMP receptor encoded in the dncV operon. The chain is Cyclic GMP-AMP synthase from Escherichia coli.